We begin with the raw amino-acid sequence, 296 residues long: GTPase Era (296 aa).

The Era-type G domain occupies R7–E174. The interval G15 to S22 is G1. G15–S22 is a GTP binding site. The tract at residues Q41–H45 is G2. Positions D62 to G65 are G3. Residues D62–F66 and S123–D126 contribute to the GTP site. The segment at S123–D126 is G4. A G5 region spans residues V153–A155. The KH type-2 domain occupies V197–K281.

This sequence belongs to the TRAFAC class TrmE-Era-EngA-EngB-Septin-like GTPase superfamily. Era GTPase family. Monomer.

The protein localises to the cytoplasm. It is found in the cell inner membrane. Functionally, an essential GTPase that binds both GDP and GTP, with rapid nucleotide exchange. Plays a role in 16S rRNA processing and 30S ribosomal subunit biogenesis and possibly also in cell cycle regulation and energy metabolism. The chain is GTPase Era from Bordetella avium (strain 197N).